Consider the following 316-residue polypeptide: HTH-type transcriptional regulator PecT (316 aa).

Residues 11–68 (LDLDLLRTFVAVADLNTFAAAAVAVCRTQSAVSQQMQRLEQLIGKELFARHGRNKLLT) form the HTH lysR-type domain. Residues 28 to 47 (FAAAAVAVCRTQSAVSQQMQ) constitute a DNA-binding region (H-T-H motif). The segment at 293-316 (LPVSTGTESELREPPTDESLKDIT) is disordered. Over residues 301–316 (SELREPPTDESLKDIT) the composition is skewed to basic and acidic residues.

This sequence belongs to the LysR transcriptional regulatory family.

Functionally, regulates pectinase gene expression. The sequence is that of HTH-type transcriptional regulator PecT (pecT) from Dickeya dadantii (strain 3937) (Erwinia chrysanthemi (strain 3937)).